We begin with the raw amino-acid sequence, 291 residues long: ATP synthase gamma chain (291 aa).

Belongs to the ATPase gamma chain family. In terms of assembly, F-type ATPases have 2 components, CF(1) - the catalytic core - and CF(0) - the membrane proton channel. CF(1) has five subunits: alpha(3), beta(3), gamma(1), delta(1), epsilon(1). CF(0) has three main subunits: a, b and c.

It is found in the cell membrane. Its function is as follows. Produces ATP from ADP in the presence of a proton gradient across the membrane. The gamma chain is believed to be important in regulating ATPase activity and the flow of protons through the CF(0) complex. In Buchnera aphidicola subsp. Baizongia pistaciae (strain Bp), this protein is ATP synthase gamma chain.